A 164-amino-acid chain; its full sequence is Phosphopantetheine adenylyltransferase (164 aa).

Thr9 lines the substrate pocket. Residues 9-10 and His17 contribute to the ATP site; that span reads TF. 3 residues coordinate substrate: Lys41, Leu73, and Arg87. ATP contacts are provided by residues 88 to 90, Glu98, and 123 to 129; these read GLR and YMFISAT.

This sequence belongs to the bacterial CoaD family. Homohexamer. The cofactor is Mg(2+).

It localises to the cytoplasm. It carries out the reaction (R)-4'-phosphopantetheine + ATP + H(+) = 3'-dephospho-CoA + diphosphate. Its pathway is cofactor biosynthesis; coenzyme A biosynthesis; CoA from (R)-pantothenate: step 4/5. In terms of biological role, reversibly transfers an adenylyl group from ATP to 4'-phosphopantetheine, yielding dephospho-CoA (dPCoA) and pyrophosphate. The sequence is that of Phosphopantetheine adenylyltransferase from Nitrosomonas eutropha (strain DSM 101675 / C91 / Nm57).